We begin with the raw amino-acid sequence, 147 residues long: uncharacterized protein (147 aa).

A helical membrane pass occupies residues 71 to 91 (IDILAFVAGTVGVGSLVLLQF).

The protein localises to the virion. Its subcellular location is the host membrane. This is an uncharacterized protein from Acanthamoeba polyphaga mimivirus (APMV).